An 877-amino-acid polypeptide reads, in one-letter code: Putative ankyrin repeat protein R748 (877 aa).

6 ANK repeats span residues 44-74, 79-109, 115-145, 202-231, 243-272, and 282-311; these read IRHICLTGSYNNNQMSIMKILMNKFPKTINV, QNNTYLHQSIFNRHKIFVDFFMNELNDNINY, IGISHLHALVNYGYIDHIETAIIKDPGAIQQ, MGYRAIECAVRYCSTDVIDELISLGFSINE, NNNDLIGFATQIDRLDMVKHLINIGAPIHM, and LVPTCLVVAIKFKRDQCIHYLLNLPESIQA. Residues 525 to 579 are disordered; the sequence is DSDEDPVCDSNESDNSNDINNHVKSDNKLNSSNDYYDEDDSEDNYNNQSDDEPLV. The segment covering 533 to 544 has biased composition (low complexity); sequence DSNESDNSNDIN.

This Acanthamoeba polyphaga mimivirus (APMV) protein is Putative ankyrin repeat protein R748.